A 691-amino-acid polypeptide reads, in one-letter code: Lipase 2 (691 aa).

An N-terminal signal peptide occupies residues M1–A37. Positions E34–K72 are enriched in polar residues. The segment at E34–K267 is disordered. Residues S38 to K296 constitute a propeptide that is removed on maturation. Residues Q73–G82 show a composition bias toward basic and acidic residues. Composition is skewed to polar residues over residues K83 to Q115, S125 to I172, and P186 to A207. Basic and acidic residues-rich tracts occupy residues I226–E238 and K258–K267. The active-site Nucleophile is S413. G580 contacts Ca(2+). D604 (charge relay system) is an active-site residue. Ca(2+) is bound at residue D645. H646 serves as the catalytic Charge relay system. Positions 648, 653, and 656 each coordinate Ca(2+).

The protein belongs to the AB hydrolase superfamily. Lipase family.

The protein resides in the secreted. It carries out the reaction a triacylglycerol + H2O = a diacylglycerol + a fatty acid + H(+). This Staphylococcus aureus (strain Mu50 / ATCC 700699) protein is Lipase 2 (lip2).